We begin with the raw amino-acid sequence, 436 residues long: Protein TolB homolog (436 aa).

Residues 1–27 form the signal peptide; the sequence is MRHSIRLTAALLLAFIACFSFPLSAMA.

The protein belongs to the TolB family.

It is found in the periplasm. The polypeptide is Protein TolB homolog (Chlorobium luteolum (strain DSM 273 / BCRC 81028 / 2530) (Pelodictyon luteolum)).